A 1007-amino-acid polypeptide reads, in one-letter code: Zinc finger CCCH domain-containing protein 4 (1007 aa).

Residues V28–V192 form the Helicase ATP-binding domain. G41–S48 contributes to the ATP binding site. Residues D139–H142 carry the DEAH box motif. The 171-residue stretch at L250 to E420 folds into the Helicase C-terminal domain. 2 C3H1-type zinc fingers span residues A723–R750 and A751–G778.

The protein is Zinc finger CCCH domain-containing protein 4 of Oryza sativa subsp. japonica (Rice).